Consider the following 151-residue polypeptide: Small ribosomal subunit protein uS19 (151 aa).

The protein belongs to the universal ribosomal protein uS19 family.

In Picea mariana (Black spruce), this protein is Small ribosomal subunit protein uS19 (RPS15).